The primary structure comprises 67 residues: Myrmicitoxin(1)-Pm6a (67 aa).

An N-terminal signal peptide occupies residues 1–25; sequence MRSLYLSFSLTIIFVLVIMHAEAKA. The propeptide occupies 26–37; sequence ISEPNAIAEADP. Residue Val66 is modified to Valine amide.

Belongs to the formicidae venom clade 3 family. As to expression, expressed by the venom gland.

The protein localises to the secreted. In terms of biological role, toxin that causes a rapid and irreversible paralysis when intrathoracically injected into insects (blowflies). Does not cause spontaneous nocifensive behaviors by intraplantar injection in mice. Exhibits hemolytic and cytotoxic activities on HEK293 cells. The chain is Myrmicitoxin(1)-Pm6a from Pogonomyrmex maricopa (Maricopa harvester ant).